Reading from the N-terminus, the 452-residue chain is Chromosomal replication initiator protein DnaA (452 aa).

Residues 1 to 84 (MTENEQIFWN…SIEYVFEETQ (84 aa)) are domain I, interacts with DnaA modulators. The tract at residues 84-110 (QSTSNSPQISQNKTAELATETLPFVQN) is domain II. A domain III, AAA+ region region spans residues 111 to 329 (DLNPKYSFDN…GALKDISLVA (219 aa)). ATP contacts are provided by glycine 155, glycine 157, lysine 158, and threonine 159. The tract at residues 330-452 (NFKKLDVITV…EMETIKNKIK (123 aa)) is domain IV, binds dsDNA.

It belongs to the DnaA family. In terms of assembly, oligomerizes as a right-handed, spiral filament on DNA at oriC.

It localises to the cytoplasm. Plays an essential role in the initiation and regulation of chromosomal replication. ATP-DnaA binds to the origin of replication (oriC) to initiate formation of the DNA replication initiation complex once per cell cycle. Binds the DnaA box (a 9 base pair repeat at the origin) and separates the double-stranded (ds)DNA. Forms a right-handed helical filament on oriC DNA; dsDNA binds to the exterior of the filament while single-stranded (ss)DNA is stabiized in the filament's interior. The ATP-DnaA-oriC complex binds and stabilizes one strand of the AT-rich DNA unwinding element (DUE), permitting loading of DNA polymerase. After initiation quickly degrades to an ADP-DnaA complex that is not apt for DNA replication. Binds acidic phospholipids. The sequence is that of Chromosomal replication initiator protein DnaA from Streptococcus mutans serotype c (strain ATCC 700610 / UA159).